The primary structure comprises 282 residues: 4-diphosphocytidyl-2-C-methyl-D-erythritol kinase (282 aa).

Lysine 9 is a catalytic residue. 98–108 (PMGGGLGGGSS) contributes to the ATP binding site. Aspartate 140 is an active-site residue.

This sequence belongs to the GHMP kinase family. IspE subfamily. Homodimer.

It carries out the reaction 4-CDP-2-C-methyl-D-erythritol + ATP = 4-CDP-2-C-methyl-D-erythritol 2-phosphate + ADP + H(+). Its pathway is isoprenoid biosynthesis; isopentenyl diphosphate biosynthesis via DXP pathway; isopentenyl diphosphate from 1-deoxy-D-xylulose 5-phosphate: step 3/6. Catalyzes the phosphorylation of the position 2 hydroxy group of 4-diphosphocytidyl-2C-methyl-D-erythritol. This is 4-diphosphocytidyl-2-C-methyl-D-erythritol kinase from Salmonella paratyphi B (strain ATCC BAA-1250 / SPB7).